The primary structure comprises 238 residues: 1-(5-phosphoribosyl)-5-[(5-phosphoribosylamino)methylideneamino] imidazole-4-carboxamide isomerase (238 aa).

D8 functions as the Proton acceptor in the catalytic mechanism. Catalysis depends on D130, which acts as the Proton donor.

This sequence belongs to the HisA/HisF family.

It localises to the cytoplasm. It catalyses the reaction 1-(5-phospho-beta-D-ribosyl)-5-[(5-phospho-beta-D-ribosylamino)methylideneamino]imidazole-4-carboxamide = 5-[(5-phospho-1-deoxy-D-ribulos-1-ylimino)methylamino]-1-(5-phospho-beta-D-ribosyl)imidazole-4-carboxamide. The protein operates within amino-acid biosynthesis; L-histidine biosynthesis; L-histidine from 5-phospho-alpha-D-ribose 1-diphosphate: step 4/9. The sequence is that of 1-(5-phosphoribosyl)-5-[(5-phosphoribosylamino)methylideneamino] imidazole-4-carboxamide isomerase from Methanococcus maripaludis (strain C7 / ATCC BAA-1331).